The sequence spans 217 residues: 7-cyano-7-deazaguanine synthase (217 aa).

10-20 is a binding site for ATP; that stretch reads FSGGQDSTTCL. Residues Cys185, Cys194, Cys197, and Cys200 each coordinate Zn(2+).

It belongs to the QueC family. As to quaternary structure, homodimer. Requires Zn(2+) as cofactor.

The catalysed reaction is 7-carboxy-7-deazaguanine + NH4(+) + ATP = 7-cyano-7-deazaguanine + ADP + phosphate + H2O + H(+). It participates in purine metabolism; 7-cyano-7-deazaguanine biosynthesis. Its function is as follows. Catalyzes the ATP-dependent conversion of 7-carboxy-7-deazaguanine (CDG) to 7-cyano-7-deazaguanine (preQ(0)). The protein is 7-cyano-7-deazaguanine synthase of Streptococcus thermophilus (strain ATCC BAA-491 / LMD-9).